Here is a 108-residue protein sequence, read N- to C-terminus: FK506-binding protein 1 (108 aa).

The PPIase FKBP-type domain occupies 20–108 (GDSVTIHYVG…KFEVELLKIN (89 aa)).

Belongs to the FKBP-type PPIase family. FKBP1 subfamily.

The protein resides in the cytoplasm. It carries out the reaction [protein]-peptidylproline (omega=180) = [protein]-peptidylproline (omega=0). Inhibited by both FK506 and rapamycin. In terms of biological role, PPIases accelerate the folding of proteins. It catalyzes the cis-trans isomerization of proline imidic peptide bonds in oligopeptides. The polypeptide is FK506-binding protein 1 (FPR1) (Cryptococcus neoformans var. neoformans serotype D (strain JEC21 / ATCC MYA-565) (Filobasidiella neoformans)).